The primary structure comprises 324 residues: Inhibitor of growth protein 1 homolog (324 aa).

Positions 120–237 are disordered; the sequence is AEEEKKKKKS…SSRKQKSMAA (118 aa). Residues 140 to 169 are compositionally biased toward low complexity; it reads SSTTSSSSSSSSSSLSLSSSTNNTSSLNSS. Residues 170–186 show a composition bias toward gly residues; sequence SGGGGGGSGGGGGGGGH. Low complexity predominate over residues 201–229; sequence SLTSSSSSGNINGMSSSSSSSSSSSSLSS. The segment at 271 to 320 adopts a PHD-type zinc-finger fold; sequence PTYCFCNRVSFGEMVGCENPDCKIEWFHFECVGLTSTPKGKWYCPDCTRI. Zn(2+)-binding residues include cysteine 274, cysteine 276, cysteine 287, cysteine 292, histidine 298, cysteine 301, cysteine 314, and cysteine 317.

It belongs to the ING family. As to quaternary structure, interacts with H3K4me3 and to a lesser extent with H3K4me2.

The protein localises to the nucleus. Involved in regulation of the growth and differentiation transition (GDT) process, probably by regulating gene expression via histone modification. The sequence is that of Inhibitor of growth protein 1 homolog from Dictyostelium discoideum (Social amoeba).